The following is a 579-amino-acid chain: Thiol:disulfide interchange protein DsbD (579 aa).

The first 16 residues, Met1–Ala16, serve as a signal peptide directing secretion. Cystine bridges form between Cys124–Cys129 and Cys193–Cys315. Helical transmembrane passes span Ile178–Leu198, Leu230–Leu250, Tyr254–Phe274, Gly296–Thr316, Ala337–Phe357, Phe376–Trp396, Glu397–Ser417, and Gly420–Leu440. The 131-residue stretch at Thr449–His579 folds into the Thioredoxin domain. Cys495 and Cys498 are disulfide-bonded.

This sequence belongs to the thioredoxin family. DsbD subfamily.

It localises to the cell inner membrane. It carries out the reaction [protein]-dithiol + NAD(+) = [protein]-disulfide + NADH + H(+). The enzyme catalyses [protein]-dithiol + NADP(+) = [protein]-disulfide + NADPH + H(+). In terms of biological role, required to facilitate the formation of correct disulfide bonds in some periplasmic proteins and for the assembly of the periplasmic c-type cytochromes. Acts by transferring electrons from cytoplasmic thioredoxin to the periplasm. This transfer involves a cascade of disulfide bond formation and reduction steps. This is Thiol:disulfide interchange protein DsbD from Haemophilus influenzae (strain PittEE).